Reading from the N-terminus, the 343-residue chain is Protein phosphatase 2C homolog 7, mitochondrial (343 aa).

A mitochondrion-targeting transit peptide spans 1–39; the sequence is MFANVGFRTLRVSRGPLYGSCSQIISFSKRTFYSSAKSG. Residues 76 to 342 enclose the PPM-type phosphatase domain; sequence IYQKLKDSIR…DDITVVVVRV (267 aa). Aspartate 109, glycine 110, and aspartate 265 together coordinate Mn(2+).

Mg(2+) serves as cofactor. Requires Mn(2+) as cofactor.

The protein localises to the mitochondrion. It catalyses the reaction O-phospho-L-seryl-[protein] + H2O = L-seryl-[protein] + phosphate. The enzyme catalyses O-phospho-L-threonyl-[protein] + H2O = L-threonyl-[protein] + phosphate. Its function is as follows. Protein phosphatase which positively regulates biosynthesis of the ubiquinone, coenzyme Q. Dephosphorylates and activates the ubiquinone biosynthesis protein CAT5/COQ7. Also dephosphorylates CIT1 on 'Ser-462', which leads to its activation. This Saccharomyces cerevisiae (strain ATCC 204508 / S288c) (Baker's yeast) protein is Protein phosphatase 2C homolog 7, mitochondrial (PTC7).